Consider the following 173-residue polypeptide: Placenta-specific protein 1 (173 aa).

The signal sequence occupies residues M1–Q23.

This sequence belongs to the PLAC1 family.

Its subcellular location is the secreted. Its function is as follows. May play a role in placental development. In Rattus norvegicus (Rat), this protein is Placenta-specific protein 1.